Reading from the N-terminus, the 2073-residue chain is Dedicator of cytokinesis protein 11 (2073 aa).

Position 12 is a phosphoserine (Ser12). Position 16 is a phosphothreonine (Thr16). Residues Ser23 and Ser161 each carry the phosphoserine modification. The 108-residue stretch at 165-272 folds into the PH domain; it reads GVIKQGWLHK…WLITLKKIIQ (108 aa). Phosphotyrosine is present on Tyr248. Phosphoserine is present on residues Ser306, Ser440, and Ser445. The C2 DOCK-type domain occupies 640–818; sequence KNHLYVYPLQ…PLLKIKSHLE (179 aa). Residues 1226–1267 form a disordered region; it reads FQNGHGIKREDSRGSLIPEGATGFPDQGNTGENTRQSSTRSS. Ser1237 and Ser1240 each carry phosphoserine. The DOCKER domain maps to 1609 to 2036; sequence KSYASTPELR…LSDIIHEQIL (428 aa).

This sequence belongs to the DOCK family. As to quaternary structure, interacts with CDC42.

Functionally, guanine nucleotide-exchange factor (GEF) that activates CDC42 by exchanging bound GDP for free GTP. Required for marginal zone (MZ) B-cell development, is associated with early bone marrow B-cell development, MZ B-cell formation, MZ B-cell number and marginal metallophilic macrophages morphology. Facilitates filopodia formation through the activation of CDC42. The protein is Dedicator of cytokinesis protein 11 of Homo sapiens (Human).